The following is a 71-amino-acid chain: Translation initiation factor IF-1 (71 aa).

The region spanning 1-71 is the S1-like domain; it reads MSKDDLIQFT…LTKGRVIHRH (71 aa).

It belongs to the IF-1 family. As to quaternary structure, component of the 30S ribosomal translation pre-initiation complex which assembles on the 30S ribosome in the order IF-2 and IF-3, IF-1 and N-formylmethionyl-tRNA(fMet); mRNA recruitment can occur at any time during PIC assembly.

The protein localises to the cytoplasm. One of the essential components for the initiation of protein synthesis. Stabilizes the binding of IF-2 and IF-3 on the 30S subunit to which N-formylmethionyl-tRNA(fMet) subsequently binds. Helps modulate mRNA selection, yielding the 30S pre-initiation complex (PIC). Upon addition of the 50S ribosomal subunit IF-1, IF-2 and IF-3 are released leaving the mature 70S translation initiation complex. This chain is Translation initiation factor IF-1, found in Rickettsia prowazekii (strain Madrid E).